The sequence spans 315 residues: MPITVKDELPAIARLRQENVFVMPQTRAKTQEIRPMRLAILNLMPNKVETEVQFIRLLANSPLQVNVELLRLDTHRSSSNSEQHLDTFYRYFSEVKNNNYDALIVTGAPLAHLEYQDVAYWDEFTAILDWAEQHVTSTLFSCWAAHAALYHHYKIKRDLKTDKLCGVFTHQCYFEHGALTRGFDDTFLVPHSRYGHVDVNKINACNELVVLAGSEKVGAYLVKNKSGSQVFITGHPEYDADSLKAEYQRDCEKSDNAPKPENYFPDDDATKQPSKTWQSHAFLLFSNWLNYYVYQTTPYDINLVSQDVRTNNYAE.

The active-site Acyl-thioester intermediate is cysteine 142. The substrate site is built by lysine 163 and serine 192. Histidine 235 (proton acceptor) is an active-site residue. Glutamate 237 is an active-site residue. Arginine 249 serves as a coordination point for substrate. Over residues 249-258 (RDCEKSDNAP) the composition is skewed to basic and acidic residues. The tract at residues 249 to 271 (RDCEKSDNAPKPENYFPDDDATK) is disordered.

The protein belongs to the MetA family.

Its subcellular location is the cytoplasm. It catalyses the reaction L-homoserine + succinyl-CoA = O-succinyl-L-homoserine + CoA. It participates in amino-acid biosynthesis; L-methionine biosynthesis via de novo pathway; O-succinyl-L-homoserine from L-homoserine: step 1/1. Transfers a succinyl group from succinyl-CoA to L-homoserine, forming succinyl-L-homoserine. The chain is Homoserine O-succinyltransferase from Pseudoalteromonas translucida (strain TAC 125).